A 606-amino-acid polypeptide reads, in one-letter code: Kelch-like protein 26 (606 aa).

The span at Met-1–Ser-19 shows a compositional bias: low complexity. Residues Met-1–Leu-20 are disordered. Ala-2 is subject to N-acetylalanine. One can recognise a BTB domain in the interval Leu-54–Leu-121. The BACK domain maps to Cys-156–Gln-257. Kelch repeat units lie at residues Ser-301–Asn-352, Phe-353–Gly-404, Leu-406–Gly-451, Arg-452–Gly-499, Ile-501–Arg-550, and Ile-552–Leu-599. A Phosphoserine modification is found at Ser-430.

May play a role in endo(sarco)plasmic reticulum (ER/SR) mitochondrial signaling. May be part of the ubiquitin-proteasome system (UPS) and affect ubiquitination and degradation of target substrates in cardiomyocytes. This is Kelch-like protein 26 (Klhl26) from Mus musculus (Mouse).